The chain runs to 94 residues: Small ribosomal subunit protein bS18 (94 aa).

The span at Met-1–Glu-12 shows a compositional bias: low complexity. Residues Met-1–Lys-29 form a disordered region. Over residues Arg-16–Lys-29 the composition is skewed to basic residues.

Belongs to the bacterial ribosomal protein bS18 family. In terms of assembly, part of the 30S ribosomal subunit. Forms a tight heterodimer with protein bS6.

Functionally, binds as a heterodimer with protein bS6 to the central domain of the 16S rRNA, where it helps stabilize the platform of the 30S subunit. In Leuconostoc citreum (strain KM20), this protein is Small ribosomal subunit protein bS18.